A 443-amino-acid polypeptide reads, in one-letter code: Exodeoxyribonuclease 7 large subunit (443 aa).

This sequence belongs to the XseA family. Heterooligomer composed of large and small subunits.

Its subcellular location is the cytoplasm. It catalyses the reaction Exonucleolytic cleavage in either 5'- to 3'- or 3'- to 5'-direction to yield nucleoside 5'-phosphates.. Its function is as follows. Bidirectionally degrades single-stranded DNA into large acid-insoluble oligonucleotides, which are then degraded further into small acid-soluble oligonucleotides. In Vibrio vulnificus (strain CMCP6), this protein is Exodeoxyribonuclease 7 large subunit.